Here is a 35-residue protein sequence, read N- to C-terminus: Ranatuerin-2SPb (35 aa).

A disulfide bridge connects residues cysteine 28 and cysteine 33.

As to expression, expressed by the skin glands.

The protein resides in the secreted. Its function is as follows. Antibacterial activity against Gram-positive bacterium S.aureus. Shows no detectable hemolytic activity towards human erythrocytes. This Lithobates septentrionalis (Mink frog) protein is Ranatuerin-2SPb.